The primary structure comprises 356 residues: Protein ATP1B4 (356 aa).

The Nuclear segment spans residues 1–109 (MRRQLRSRRA…SLARTGQSRS (109 aa)). A disordered region spans residues 26–78 (EANHNYLADEEEEAEEEAQVMMVPGLEEEEEEEEGKEEEEEREEEEGQGQSTG). 2 stretches are compositionally biased toward acidic residues: residues 33 to 43 (ADEEEEAEEEA) and 51 to 72 (LEEEEEEEEGKEEEEEREEEEG). The helical; Signal-anchor for type II membrane protein transmembrane segment at 110–130 (LILVIYFFFYASLAAVITLFI) threads the bilayer. Residues 131–356 (YMLFLAISPY…RIIFTLNIET (226 aa)) lie on the Perinuclear space side of the membrane.

This sequence belongs to the X(+)/potassium ATPases subunit beta family. In terms of assembly, associates with a SMAD7-transcriptional complex. Interacts with TOR1AIP1. Does not associate with known Na,K-ATPase alpha-subunits. Interacts with SNW1. In terms of tissue distribution, expressed in skeletal muscle (at protein level). Expressed during postnatal development in skeletal muscle and heart.

It is found in the nucleus inner membrane. May act as a transcriptional coregulator during muscle development through its interaction with SNW1. Has lost its ancestral function as a Na,K-ATPase beta-subunit. This Mus musculus (Mouse) protein is Protein ATP1B4 (Atp1b4).